Consider the following 607-residue polypeptide: Siderochrome iron transporter 2 (607 aa).

The interval Met1–Leu46 is disordered. 13 consecutive transmembrane segments (helical) span residues Val86 to Ile106, Ile129 to Trp149, Ala152 to Cys172, Ala180 to Val200, Ala210 to Ala230, Trp242 to Phe262, Ile297 to Ala317, Ser326 to Trp346, Leu367 to Phe387, Tyr404 to Val424, His432 to Phe452, Ile459 to Gly479, and Phe499 to Tyr519. Asn538 carries N-linked (GlcNAc...) asparagine glycosylation. Residues Phe573–Lys593 form a helical membrane-spanning segment.

It belongs to the major facilitator superfamily.

The protein resides in the cell membrane. Major facilitator transporter involved in ferrichrome (FC) uptake. The chain is Siderochrome iron transporter 2 from Aspergillus fumigatus (strain ATCC MYA-4609 / CBS 101355 / FGSC A1100 / Af293) (Neosartorya fumigata).